We begin with the raw amino-acid sequence, 380 residues long: D-threo-3-hydroxyaspartate dehydratase (380 aa).

An N6-(pyridoxal phosphate)lysine modification is found at Lys-43.

Belongs to the DSD1 family. In terms of assembly, monomer. Pyridoxal 5'-phosphate is required as a cofactor. Requires Mn(2+) as cofactor. The cofactor is Co(2+). Ni(2+) serves as cofactor.

The catalysed reaction is (3R)-3-hydroxy-D-aspartate = oxaloacetate + NH4(+). Strongly inhibited by hydroxylamine. Modestly inhibited by EDTA. Its function is as follows. Catalyzes the deamination of D-threo-3-hydroxyaspartate (D-THA). Also exhibits dehydratase activity towards L-threo-3-hydroxyaspartate (L-THA), L-erythro-3-hydroxyaspartate (L-EHA) and D-serine. The protein is D-threo-3-hydroxyaspartate dehydratase (dthadh) of Delftia sp. (strain HT23).